A 407-amino-acid polypeptide reads, in one-letter code: NAD(P)H-quinone oxidoreductase subunit 1 (407 aa).

The next 9 helical transmembrane spans lie at 28-48, 96-116, 127-147, 175-195, 203-223, 267-287, 309-329, 347-367, and 374-394; these read WLPL…IAAV, WLFT…YLVI, ITIG…GALM, LALS…VDIV, LFSF…IFLI, LILA…FIVP, ALVG…LAIL, WKFL…LVLL, and TLPL…AMSL.

Belongs to the complex I subunit 1 family. In terms of assembly, NDH-1 is composed of at least 11 different subunits.

Its subcellular location is the cell inner membrane. It catalyses the reaction a plastoquinone + NADH + (n+1) H(+)(in) = a plastoquinol + NAD(+) + n H(+)(out). The catalysed reaction is a plastoquinone + NADPH + (n+1) H(+)(in) = a plastoquinol + NADP(+) + n H(+)(out). In terms of biological role, NDH-1 shuttles electrons from an unknown electron donor, via FMN and iron-sulfur (Fe-S) centers, to quinones in the respiratory and/or the photosynthetic chain. The immediate electron acceptor for the enzyme in this species is believed to be plastoquinone. Couples the redox reaction to proton translocation, and thus conserves the redox energy in a proton gradient. The protein is NAD(P)H-quinone oxidoreductase subunit 1 of Gloeobacter violaceus (strain ATCC 29082 / PCC 7421).